The following is a 461-amino-acid chain: PTS system sucrose-specific EIIBC component (461 aa).

The region spanning 4-87 (KETAKRLIEL…SKEADIEREE (84 aa)) is the PTS EIIB type-1 domain. C26 (phosphocysteine intermediate; for EIIB activity) is an active-site residue. The PTS EIIC type-1 domain occupies 107–461 (KTLSNIFVPI…KINEDEERKK (355 aa)). 10 helical membrane passes run 112–132 (IFVP…LLGM), 148–168 (LLDM…GVSA), 178–198 (LGAV…WGLA), 208–228 (FGFD…LLAV), 248–268 (LLVT…IAIG), 289–309 (AGFV…LTGV), 329–349 (LLPI…AVFF), 359–379 (IALP…IFGV), 387–407 (FIAA…THVA), and 430–450 (LIHY…AAFV).

It localises to the cell membrane. It carries out the reaction N(pros)-phospho-L-histidyl-[protein](out) + sucrose = sucrose 6(G)-phosphate(in) + L-histidyl-[protein]. In terms of biological role, the phosphoenolpyruvate-dependent sugar phosphotransferase system (sugar PTS), a major carbohydrate active transport system, catalyzes the phosphorylation of incoming sugar substrates concomitantly with their translocation across the cell membrane. This system is involved in sucrose transport. The sequence is that of PTS system sucrose-specific EIIBC component (sacP) from Bacillus subtilis (strain 168).